Consider the following 276-residue polypeptide: MKFSKMHSLGNDFVIVNNIDKKNNISPIFIKKLSDRYTGIGFDQLILIEFFCKKYFYFKIKIFNSDSSESFQCINGIRCVFMFLKIKKLIKKNIAFIGNNLGLSKTLMTKNKLICVKIKPPRFYIEKDILVNPKYNNKEKIILRIFKKKITCYFVFVGNPHCIIISKNIEYNNFSLLSKYLLKNNIFPNKINISIMNILDFDLIKLKVYERGSGETQSCGSAAAAAAAVAIYYKKLNKKIKVNFSRGNLYVYWEKIGNFMSIIGPANHIYDGKINF.

Asn-11, Gln-44, and Asn-64 together coordinate substrate. Catalysis depends on Cys-73, which acts as the Proton donor. Residues 74-75 (IN), Asn-159, Asn-192, and 210-211 (ER) each bind substrate. Residue Cys-219 is the Proton acceptor of the active site. 220-221 (GS) provides a ligand contact to substrate.

The protein belongs to the diaminopimelate epimerase family. As to quaternary structure, homodimer.

It localises to the cytoplasm. The catalysed reaction is (2S,6S)-2,6-diaminopimelate = meso-2,6-diaminopimelate. The protein operates within amino-acid biosynthesis; L-lysine biosynthesis via DAP pathway; DL-2,6-diaminopimelate from LL-2,6-diaminopimelate: step 1/1. In terms of biological role, catalyzes the stereoinversion of LL-2,6-diaminopimelate (L,L-DAP) to meso-diaminopimelate (meso-DAP), a precursor of L-lysine and an essential component of the bacterial peptidoglycan. The protein is Diaminopimelate epimerase of Wigglesworthia glossinidia brevipalpis.